A 266-amino-acid chain; its full sequence is Undecaprenyl-diphosphatase (266 aa).

The next 8 helical transmembrane spans lie at 1–21, 39–59, 87–107, 114–134, 144–164, 184–204, 218–238, and 246–266; these read MDIFQVIVLALIQGLTEFLPI, QGLTFDVAVNTGSLLAVVIYF, WWIILATIPAVIFGFTAKDFI, IEVIATTTIVFGLLLWWADKL, VGWKKALLIGFAQAMALIPGT, AARFSFLMSVPVSLGAAILVV, ALVLGTALSFVAAYLCIHYFL, and MTPFVIYRLALGAILCVVIFA.

It belongs to the UppP family.

Its subcellular location is the cell inner membrane. It carries out the reaction di-trans,octa-cis-undecaprenyl diphosphate + H2O = di-trans,octa-cis-undecaprenyl phosphate + phosphate + H(+). Catalyzes the dephosphorylation of undecaprenyl diphosphate (UPP). Confers resistance to bacitracin. This is Undecaprenyl-diphosphatase from Shewanella loihica (strain ATCC BAA-1088 / PV-4).